Consider the following 517-residue polypeptide: Transmembrane protein 180 (517 aa).

At 1–11 the chain is on the extracellular side; that stretch reads MRLGGPWAWLL. Residues 12-43 form a helical membrane-spanning segment; sequence GLPTAVVYGSLALFVSVLHNVFLLYYVDTFVS. At 44–55 the chain is on the cytoplasmic side; sequence VYKIDKAAFWVG. The helical transmembrane segment at 56-74 threads the bilayer; it reads ETVFLLWNSLNDPLFGWLS. The Extracellular portion of the chain corresponds to 75–100; that stretch reads DRQFLSSQPRSGAGLSSRAVVLARVR. The chain crosses the membrane as a helical span at residues 101–118; sequence ALGWHGPLLALSFLAFWV. Residues 119–126 lie on the Cytoplasmic side of the membrane; it reads PWAPAGLQ. Residues 127–151 form a helical membrane-spanning segment; sequence FLLCLCLYDGFLTLVDLHHHALLAD. Residues 152 to 155 are Extracellular-facing; it reads LALS. A helical transmembrane segment spans residues 156–179; sequence AHDRTHLNFYCSLFSAAGSLSVFA. The Cytoplasmic portion of the chain corresponds to 180 to 191; that stretch reads SYAFWNKEDFSS. A helical membrane pass occupies residues 192-223; sequence FRAFCLALATGSGLGFVGAARLLRRRVEAAGR. Over 224 to 264 the chain is Extracellular; the sequence is EPGCPAMAVNDGLCEEELLVGGEEAGSITLGQYLQQLARHR. Residues 265–292 traverse the membrane as a helical segment; sequence NFLWFVGMDLVQVFHCHFNSNFFPLFLE. Residues 293-305 lie on the Cytoplasmic side of the membrane; the sequence is HLLSDHISLSTGS. A helical transmembrane segment spans residues 306–325; sequence FLLGISYVAPHLNNLYFLPL. Topologically, residues 326–330 are extracellular; sequence CRRWG. The helical transmembrane segment at 331 to 350 threads the bilayer; it reads VYAVVRGLFLLKLGLSLLML. Residues 351–358 lie on the Cytoplasmic side of the membrane; sequence LAGPDHPG. The chain crosses the membrane as a helical span at residues 359–393; sequence LLCLFIASNRVFTEGTCKLLTLVVTDLVDEDLVLN. Residues 394–402 lie on the Extracellular side of the membrane; that stretch reads HRKQAASAL. A helical membrane pass occupies residues 403–429; it reads LFGMVALVTKPGQTFAPLLGTWLLCFY. Residues 430–466 are Cytoplasmic-facing; sequence TGHDLFQQHPPAPVGSAQPWPEPPAPPPAQAPPLRQG. The helical transmembrane segment at 467-485 threads the bilayer; sequence CFYLLVLVPIACALLQLFT. Over 486–517 the chain is Extracellular; sequence WSQFTLHGRRLHMVKAQRQSLSRAQTLDVKMV.

The protein resides in the cell membrane. The protein is Transmembrane protein 180 of Bos taurus (Bovine).